Here is a 171-residue protein sequence, read N- to C-terminus: AP-3 complex subunit sigma (171 aa).

The protein belongs to the adaptor complexes small subunit family. In terms of assembly, adaptor protein complex 3 (AP-3) is a heterotetramer composed of two large adaptins (delta-type subunit and beta-type subunit), a medium adaptin (mu-type subunit) and a small adaptin (sigma-type subunit).

It is found in the endosome membrane. In terms of biological role, part of the AP-3 complex, an adaptor-related complex which is essential for the compartmentalization of the endocytic pathway. This chain is AP-3 complex subunit sigma (ap3s1), found in Dictyostelium discoideum (Social amoeba).